The following is a 116-amino-acid chain: FK506-binding protein 1 (116 aa).

Residues 19–116 (GDKVSIHYTG…IFEVELLKIN (98 aa)) enclose the PPIase FKBP-type domain.

This sequence belongs to the FKBP-type PPIase family. FKBP1 subfamily.

The protein localises to the cytoplasm. The catalysed reaction is [protein]-peptidylproline (omega=180) = [protein]-peptidylproline (omega=0). Its activity is regulated as follows. Inhibited by both FK506 and rapamycin. PPIases accelerate the folding of proteins. It catalyzes the cis-trans isomerization of proline imidic peptide bonds in oligopeptides. The chain is FK506-binding protein 1 (fpr1) from Aspergillus oryzae (strain ATCC 42149 / RIB 40) (Yellow koji mold).